Consider the following 270-residue polypeptide: DNA-directed RNA polymerase subunit Rpo3 (270 aa).

Cys206, Cys209, and Cys212 together coordinate [3Fe-4S] cluster.

It belongs to the archaeal Rpo3/eukaryotic RPB3 RNA polymerase subunit family. As to quaternary structure, part of the RNA polymerase complex. [3Fe-4S] cluster serves as cofactor.

It is found in the cytoplasm. The enzyme catalyses RNA(n) + a ribonucleoside 5'-triphosphate = RNA(n+1) + diphosphate. Functionally, DNA-dependent RNA polymerase (RNAP) catalyzes the transcription of DNA into RNA using the four ribonucleoside triphosphates as substrates. In Methanosphaera stadtmanae (strain ATCC 43021 / DSM 3091 / JCM 11832 / MCB-3), this protein is DNA-directed RNA polymerase subunit Rpo3.